The following is a 33-amino-acid chain: Photosystem II reaction center protein Psb30 (33 aa).

The helical transmembrane segment at 5–25 (LIVQLGSLALITVAGPAIIVL) threads the bilayer.

This sequence belongs to the Psb30/Ycf12 family. PSII is composed of 1 copy each of membrane proteins PsbA, PsbB, PsbC, PsbD, PsbE, PsbF, PsbH, PsbI, PsbJ, PsbK, PsbL, PsbM, PsbT, PsbY, PsbZ, Psb30/Ycf12, peripheral proteins of the oxygen-evolving complex and a large number of cofactors. It forms dimeric complexes.

It is found in the plastid. Its subcellular location is the chloroplast thylakoid membrane. Its function is as follows. A core subunit of photosystem II (PSII), probably helps stabilize the reaction center. The chain is Photosystem II reaction center protein Psb30 from Euglena stellata.